We begin with the raw amino-acid sequence, 344 residues long: Serine/arginine-rich splicing factor 6 (344 aa).

An RRM 1 domain is found at 1-72 (MPRVYIGRLS…ERVIVEHARG (72 aa)). 3 positions are modified to phosphoserine: Ser-45, Ser-81, and Ser-84. A disordered region spans residues 75–103 (RDRDGYSYGSRSGGGGYSSRRTSGRDKYG). In terms of domain architecture, RRM 2 spans 110-183 (YRLIVENLSS…RNIRLIEDKP (74 aa)). Lys-165 is subject to N6-acetyllysine. The disordered stretch occupies residues 176 to 344 (IRLIEDKPRT…RSRSRSSSRD (169 aa)). Lys-182 participates in a covalent cross-link: Glycyl lysine isopeptide (Lys-Gly) (interchain with G-Cter in SUMO2). The segment covering 185 to 250 (TSHRRSYSGS…RKSRSKSKSK (66 aa)) has biased composition (basic residues). 2 stretches are compositionally biased toward basic and acidic residues: residues 264-273 (RSKDEYEKSR) and 280-291 (SPKENGKGDIKS). Residues Ser-297 and Ser-299 each carry the phosphoserine modification. Ser-303 carries the post-translational modification Phosphoserine; by DYRK1A. Phosphoserine occurs at positions 314 and 316. Residues 322 to 344 (ATSRSRSRSRSKSRSRSRSSSRD) are compositionally biased toward basic residues.

The protein belongs to the splicing factor SR family. Binds SREK1/SFRS12. Interacts with DYRK1A. Extensively phosphorylated on serine residues in the RS domain. Phosphorylated by DYRK1A, probably in the RS domain. Phosphorylation by DYRK1A modulates alternative splice site selection and inhibits the expression of MAPT/Tau exon 10.

Its subcellular location is the nucleus. It localises to the nucleus speckle. Functionally, plays a role in constitutive splicing and modulates the selection of alternative splice sites. Plays a role in the alternative splicing of MAPT/Tau exon 10. Binds to alternative exons of TNC pre-mRNA and promotes the expression of alternatively spliced TNC. Plays a role in wound healing and in the regulation of keratinocyte differentiation and proliferation via its role in alternative splicing. The protein is Serine/arginine-rich splicing factor 6 (SRSF6) of Homo sapiens (Human).